Here is a 234-residue protein sequence, read N- to C-terminus: Large ribosomal subunit protein uL3 (234 aa).

Residues 137 to 156 (AGHGVERKHRSPGSVGGCAT) form a disordered region.

It belongs to the universal ribosomal protein uL3 family. As to quaternary structure, part of the 50S ribosomal subunit. Forms a cluster with proteins L14 and L19.

One of the primary rRNA binding proteins, it binds directly near the 3'-end of the 23S rRNA, where it nucleates assembly of the 50S subunit. This chain is Large ribosomal subunit protein uL3, found in Frankia alni (strain DSM 45986 / CECT 9034 / ACN14a).